We begin with the raw amino-acid sequence, 289 residues long: 4-hydroxy-tetrahydrodipicolinate synthase (289 aa).

Thr-43 is a binding site for pyruvate. Tyr-131 acts as the Proton donor/acceptor in catalysis. Catalysis depends on Lys-160, which acts as the Schiff-base intermediate with substrate. Residue Ile-200 participates in pyruvate binding.

Belongs to the DapA family. In terms of assembly, homotetramer; dimer of dimers.

Its subcellular location is the cytoplasm. The enzyme catalyses L-aspartate 4-semialdehyde + pyruvate = (2S,4S)-4-hydroxy-2,3,4,5-tetrahydrodipicolinate + H2O + H(+). Its pathway is amino-acid biosynthesis; L-lysine biosynthesis via DAP pathway; (S)-tetrahydrodipicolinate from L-aspartate: step 3/4. Functionally, catalyzes the condensation of (S)-aspartate-beta-semialdehyde [(S)-ASA] and pyruvate to 4-hydroxy-tetrahydrodipicolinate (HTPA). This chain is 4-hydroxy-tetrahydrodipicolinate synthase, found in Methanococcus vannielii (strain ATCC 35089 / DSM 1224 / JCM 13029 / OCM 148 / SB).